The chain runs to 209 residues: Uracil phosphoribosyltransferase (209 aa).

5-phospho-alpha-D-ribose 1-diphosphate contacts are provided by residues Arg-79, Arg-104, and 131–139 (DPMLATGGS). Residues Ile-194 and 199–201 (GDA) each bind uracil. Asp-200 is a 5-phospho-alpha-D-ribose 1-diphosphate binding site.

This sequence belongs to the UPRTase family. The cofactor is Mg(2+).

The enzyme catalyses UMP + diphosphate = 5-phospho-alpha-D-ribose 1-diphosphate + uracil. It functions in the pathway pyrimidine metabolism; UMP biosynthesis via salvage pathway; UMP from uracil: step 1/1. Its activity is regulated as follows. Allosterically activated by GTP. Catalyzes the conversion of uracil and 5-phospho-alpha-D-ribose 1-diphosphate (PRPP) to UMP and diphosphate. The sequence is that of Uracil phosphoribosyltransferase from Levilactobacillus brevis (strain ATCC 367 / BCRC 12310 / CIP 105137 / JCM 1170 / LMG 11437 / NCIMB 947 / NCTC 947) (Lactobacillus brevis).